The sequence spans 145 residues: Cell wall teichoic acid glycosylation protein GtcA (145 aa).

Transmembrane regions (helical) follow at residues 21–41 (ILMY…TFWL), 52–69 (IANT…YFSN), 96–116 (FLTY…LGIN), and 121–141 (KIWT…WIIF).

It belongs to the GtrA family.

It localises to the cell membrane. Functionally, involved in the decoration of cell wall teichoic acid with galactose and glucose. The protein is Cell wall teichoic acid glycosylation protein GtcA (gtcA) of Listeria innocua serovar 6a (strain ATCC BAA-680 / CLIP 11262).